The following is a 228-amino-acid chain: Adenosylcobinamide-GDP ribazoletransferase (228 aa).

A run of 6 helical transmembrane segments spans residues 24-44 (VWML…ILYL), 50-70 (NVLS…DGLA), 96-116 (IAGT…LFSA), 117-137 (PFYS…LALA), 159-176 (VFLG…ILLY), and 181-198 (IFAL…KISL).

Belongs to the CobS family. Requires Mg(2+) as cofactor.

Its subcellular location is the cell membrane. The enzyme catalyses alpha-ribazole + adenosylcob(III)inamide-GDP = adenosylcob(III)alamin + GMP + H(+). The catalysed reaction is alpha-ribazole 5'-phosphate + adenosylcob(III)inamide-GDP = adenosylcob(III)alamin 5'-phosphate + GMP + H(+). The protein operates within cofactor biosynthesis; adenosylcobalamin biosynthesis; adenosylcobalamin from cob(II)yrinate a,c-diamide: step 7/7. Its function is as follows. Joins adenosylcobinamide-GDP and alpha-ribazole to generate adenosylcobalamin (Ado-cobalamin). Also synthesizes adenosylcobalamin 5'-phosphate from adenosylcobinamide-GDP and alpha-ribazole 5'-phosphate. This chain is Adenosylcobinamide-GDP ribazoletransferase, found in Pyrococcus furiosus (strain ATCC 43587 / DSM 3638 / JCM 8422 / Vc1).